A 243-amino-acid polypeptide reads, in one-letter code: UPF0246 protein MGAS10750_Spy1880 (243 aa).

The protein belongs to the UPF0246 family.

The protein is UPF0246 protein MGAS10750_Spy1880 of Streptococcus pyogenes serotype M4 (strain MGAS10750).